The following is a 689-amino-acid chain: MSGRNNNKLPTNLPQLQNLIKRDPTSYREEFLQQYKHYLSVIEIFKLQPDKPNKELSTLVMFMAQTAHCFPQYLEDFPEQLKSLLRVHHTVMDPDQRMTLCKALILLRNKNLISPSVLLELFFELLRCQDKLLRKTLYTHIVTDIKNINAKHKNNKVNTTLQNFMYTMVRDNNAIAAKISLDVMIELYRRNIWNDAKTVNVISTSCFSKVTKILVAALKFFLGKDEEEKKDSDSESEDEGPTARDLMVRYSTGKKNTKNKKKLEKAMKVLKKHKKKKRPEVFNFSAIHLVHDPQEFAEKLLKQLEASKERFEVKLMHMDLISRLVGIHELFLFNFYPFVQRFLQPHQREVTKILLYAAQATHHLVPPEISQSVLRTIANNFVTDRNSGEVMTVGINAIKELTARCPLAMTEELLQDLALYKTHKDKNVSMSARSLIQLFRSLNPEMLQKKFRGKPTEASKEARIHAYGELDAKDYIPGAEVLEVEQEKTEEPEEDDGWESASLSDDDEDGEWIDVHHSSDEEQQEVADKIQAMPAEERKAKAATVSASRLLSQEDFKKIRLAQLAKEMNNAPGKSVKRKNIEIDSDEEERSGELLSLRDIEHLHKKPKSDKETRLATVMAGRTDRKEFVRKKSKMNPHASSTNKEKKKNKNFMMMRYSQNIRSKNKRSFRDKQIALRDSLLKKRKRLMK.

Residues 254-319 (KKNTKNKKKL…RFEVKLMHMD (66 aa)) adopt a coiled-coil conformation. Disordered regions lie at residues 485–512 (EQEK…DGEW) and 606–689 (KPKS…RLMK). A compositionally biased stretch (basic and acidic residues) spans 668-681 (SFRDKQIALRDSLL).

The protein belongs to the SDA1 family.

Its subcellular location is the nucleus. The protein resides in the nucleolus. Functionally, required for 60S pre-ribosomal subunits export to the cytoplasm. This chain is Protein SDA1 homolog (sdad1), found in Xenopus tropicalis (Western clawed frog).